Reading from the N-terminus, the 106-residue chain is PAT complex subunit Asterix (106 aa).

A disordered region spans residues 1-29 (MSTNNMSDPRRPNKVLRYKPPPSECNPAL). S2 is modified (N-acetylserine). Topologically, residues 2–32 (STNNMSDPRRPNKVLRYKPPPSECNPALDDP) are cytoplasmic. A helical transmembrane segment spans residues 33 to 51 (TPDYMNLLGMIFSMCGLML). K52 is a topological domain (lumenal). Residues 53–70 (LKWCAWVAVYCSFISFAN) traverse the membrane as a helical segment. Residues 71–74 (SRSS) are Cytoplasmic-facing. The chain crosses the membrane as a helical span at residues 75–95 (EDTKQMMSSFMLSISAVVMSY). At 96–106 (LQNPQPMTPPW) the chain is on the lumenal side.

Belongs to the Asterix family. As to quaternary structure, component of the PAT complex, composed of WDR83OS/Asterix and CCDC47. The PAT complex is part of the multi-pass translocon (MPT) complex, composed of three subcomplexes, the GEL complex (composed of RAB5IF/OPTI and TMCO1), the BOS complex (composed of NCLN/Nicalin, NOMO1 and TMEM147) and the PAT complex (composed of WDR83OS/Asterix and CCDC47). The MPT complex associates with the SEC61 complex.

It localises to the endoplasmic reticulum membrane. Functionally, component of the multi-pass translocon (MPT) complex that mediates insertion of multi-pass membrane proteins into the lipid bilayer of membranes. The MPT complex takes over after the SEC61 complex: following membrane insertion of the first few transmembrane segments of proteins by the SEC61 complex, the MPT complex occludes the lateral gate of the SEC61 complex to promote insertion of subsequent transmembrane regions. Within the MPT complex, the PAT subcomplex sequesters any highly polar regions in the transmembrane domains away from the non-polar membrane environment until they can be buried in the interior of the fully assembled protein. Within the PAT subcomplex, WDR83OS/Asterix binds to and redirects the substrate to a location behind the SEC61 complex. The chain is PAT complex subunit Asterix (WDR83OS) from Canis lupus familiaris (Dog).